The sequence spans 349 residues: Pinopsin (349 aa).

Over residues Met1 to Pro16 the composition is skewed to polar residues. Residues Met1–Pro22 are disordered. Topologically, residues Met1–Met32 are extracellular. Residues Tyr33–Val57 traverse the membrane as a helical segment. The Cytoplasmic segment spans residues Ser58–Asn69. Residues Tyr70–Asn94 traverse the membrane as a helical segment. Topologically, residues Ile95–Glu109 are extracellular. The cysteines at positions 106 and 183 are disulfide-linked. Residues Gly110 to Leu129 traverse the membrane as a helical segment. The Cytoplasmic portion of the chain corresponds to Glu130 to His148. The helical transmembrane segment at Ala149 to Ser172 threads the bilayer. The Extracellular segment spans residues Ser173–Ser196. Asn194 is a glycosylation site (N-linked (GlcNAc...) asparagine). Residues Tyr197–Leu224 form a helical membrane-spanning segment. Over Arg225–Arg246 the chain is Cytoplasmic. A helical membrane pass occupies residues Met247–Ala270. The Extracellular portion of the chain corresponds to Thr271–Gln278. A helical membrane pass occupies residues Pro279–Met303. Lys290 is modified (N6-(retinylidene)lysine). The Cytoplasmic portion of the chain corresponds to Asn304–Val349. 2 S-palmitoyl cysteine lipidation sites follow: Cys316 and Cys317. The disordered stretch occupies residues Gly325–Val349.

Belongs to the G-protein coupled receptor 1 family. Opsin subfamily. Phosphorylated on some or all of the serine and threonine residues present in the C-terminal region. In terms of tissue distribution, pineal gland.

Its subcellular location is the membrane. Its function is as follows. Produces a slow and prolonged phototransduction response consistent with the non-visual function of pineal photoreception. In Columba livia (Rock dove), this protein is Pinopsin.